The chain runs to 124 residues: MSYAIIEIGGTQIRVEPGRFYEINHLDAAPEDSYVVDKVLLVKDGDNVTIGQPYVAGATVEGEILSHRRGRKVIVYKMQPKKKTRKKRGHRQELTRLLVKSISVNGTAIAEALEVDAKTPVVAG.

The protein belongs to the bacterial ribosomal protein bL21 family. Part of the 50S ribosomal subunit. Contacts protein L20.

In terms of biological role, this protein binds to 23S rRNA in the presence of protein L20. The protein is Large ribosomal subunit protein bL21 of Synechocystis sp. (strain ATCC 27184 / PCC 6803 / Kazusa).